The following is a 495-amino-acid chain: MNFHHLAYWQDKALSLAIENRLFINGEYTAAAENETFETVDPVTQAPLAKIARGKSVDIDRAMSAARGVFERGDWSLSSPAKRKAVLNKLADLMEAHAEELALLETLDTGKPIRHSLRDDIPGAARAIRWYAEAIDKVYGEVATTSSHELAMIVREPVGVIAAIVPWNFPLLLTCWKLGPALAAGNSVILKPSEKSPLSAIRLAGLAKEAGLPDGVLNVVTGFGHEAGQALSRHNDIDAIAFTGSTRTGKQLLKDAGDSNMKRVWLEAGGKSANIVFADCPDLQQAASATAAGIFYNQGQVCIAGTRLLLEESIADEFLALLKQQAQNWQPGHPLDPATTMGTLIDCAHADSVHSFIREGESKGQLLLDGRNAGLAAAIGPTIFVDVDPNASLSREEIFGPVLVVTRFTSEEQALQLANDSQYGLGAAVWTRDLSRAHRMSRRLKAGSVFVNNYNDGDMTVPFGGYKQSGNGRDKSLHALEKFTELKTIWISLEA.

Position 244-249 (244-249 (GSTRTG)) interacts with NAD(+). Residues E267 and C302 contribute to the active site.

It belongs to the aldehyde dehydrogenase family.

The catalysed reaction is an aldehyde + NADP(+) + H2O = a carboxylate + NADPH + 2 H(+). It carries out the reaction an aldehyde + NAD(+) + H2O = a carboxylate + NADH + 2 H(+). The enzyme catalyses 4-(gamma-L-glutamylamino)butanal + NADP(+) + H2O = 4-(gamma-L-glutamylamino)butanoate + NADPH + 2 H(+). It catalyses the reaction 4-(gamma-L-glutamylamino)butanal + NAD(+) + H2O = 4-(gamma-L-glutamylamino)butanoate + NADH + 2 H(+). It participates in amine and polyamine degradation; putrescine degradation; 4-aminobutanoate from putrescine: step 3/4. With respect to regulation, lithium ions exhibits the highest inhibition (97%). To a lesser extent (5-20%), potassium, sodium, and ammonium ions also inhibit PuuC activity. Transition metals, such as copper and zinc ions inhibit PuuC activity by more than 90%. The presence of heavy metals (mercury, silver) or sodium hydrogensulfite in the reaction mixture completely inactivate PuuC; in contrast, disulfide reductants such as DTT and 2-mercaptoethanol significantly increase its activity by 75% and 27%, respectively. In terms of biological role, catalyzes the oxidation of 3-hydroxypropionaldehyde (3-HPA) to 3-hydroxypropionic acid (3-HP). It acts preferentially with NAD but can also use NADP. 3-HPA appears to be the most suitable substrate for PuuC followed by isovaleraldehyde, propionaldehyde, butyraldehyde, and valeraldehyde. It might play a role in propionate and/or acetic acid metabolisms. Also involved in the breakdown of putrescine through the oxidation of gamma-Glu-gamma-aminobutyraldehyde to gamma-Glu-gamma-aminobutyrate (gamma-Glu-GABA). This chain is NADP/NAD-dependent aldehyde dehydrogenase PuuC, found in Escherichia coli (strain K12).